We begin with the raw amino-acid sequence, 244 residues long: Tubulin-folding cofactor B (244 aa).

An N-acetylmethionine modification is found at methionine 1. Tyrosine 98 carries the phosphotyrosine modification. Serine 110 is subject to Phosphoserine. Positions 183 to 225 (GLTDFKPGYWIGIRYDEPLGKNDGSVNGKRYFECQAKYGAFVK) constitute a CAP-Gly domain. At lysine 219 the chain carries N6-acetyllysine.

Belongs to the TBCB family. Supercomplex made of cofactors A to E. Cofactors A and D function by capturing and stabilizing tubulin in a quasi-native conformation. Cofactor E binds to the cofactor D-tubulin complex; interaction with cofactor C then causes the release of tubulin polypeptides that are committed to the native state. Cofactors B and E can form a heterodimer which binds to alpha-tubulin and enhances their ability to dissociate tubulin heterodimers. Interacts with GAN. Interacts with DCTN1. Ubiquitinated in the presence of GAN which targets it for degradation by the proteasome. In terms of processing, phosphorylation by PAK1 is required for normal function.

The protein resides in the cytoplasm. The protein localises to the cytoskeleton. Binds to alpha-tubulin folding intermediates after their interaction with cytosolic chaperonin in the pathway leading from newly synthesized tubulin to properly folded heterodimer. Involved in regulation of tubulin heterodimer dissociation. May function as a negative regulator of axonal growth. This is Tubulin-folding cofactor B (TBCB) from Bos taurus (Bovine).